We begin with the raw amino-acid sequence, 546 residues long: Chaperonin GroEL (546 aa).

ATP is bound by residues 30-33 (TLGP), lysine 51, 87-91 (DGTTT), glycine 415, and aspartate 495.

This sequence belongs to the chaperonin (HSP60) family. Forms a cylinder of 14 subunits composed of two heptameric rings stacked back-to-back. Interacts with the co-chaperonin GroES.

The protein localises to the cytoplasm. The catalysed reaction is ATP + H2O + a folded polypeptide = ADP + phosphate + an unfolded polypeptide.. Functionally, together with its co-chaperonin GroES, plays an essential role in assisting protein folding. The GroEL-GroES system forms a nano-cage that allows encapsulation of the non-native substrate proteins and provides a physical environment optimized to promote and accelerate protein folding. The sequence is that of Chaperonin GroEL from Brucella anthropi (strain ATCC 49188 / DSM 6882 / CCUG 24695 / JCM 21032 / LMG 3331 / NBRC 15819 / NCTC 12168 / Alc 37) (Ochrobactrum anthropi).